We begin with the raw amino-acid sequence, 197 residues long: Xanthine phosphoribosyltransferase (197 aa).

2 residues coordinate xanthine: leucine 20 and asparagine 27. A 5-phospho-alpha-D-ribose 1-diphosphate-binding site is contributed by alanine 128–alanine 132. Position 156 (lysine 156) interacts with xanthine.

This sequence belongs to the purine/pyrimidine phosphoribosyltransferase family. Xpt subfamily. As to quaternary structure, homodimer.

The protein resides in the cytoplasm. The catalysed reaction is XMP + diphosphate = xanthine + 5-phospho-alpha-D-ribose 1-diphosphate. It functions in the pathway purine metabolism; XMP biosynthesis via salvage pathway; XMP from xanthine: step 1/1. Functionally, converts the preformed base xanthine, a product of nucleic acid breakdown, to xanthosine 5'-monophosphate (XMP), so it can be reused for RNA or DNA synthesis. The chain is Xanthine phosphoribosyltransferase from Bacillus cytotoxicus (strain DSM 22905 / CIP 110041 / 391-98 / NVH 391-98).